Here is an 802-residue protein sequence, read N- to C-terminus: Outer membrane usher protein CssD (802 aa).

This sequence belongs to the fimbrial export usher family.

Its subcellular location is the cell outer membrane. Involved in the export and assembly of C6 fimbrial subunits across the outer membrane. The protein is Outer membrane usher protein CssD (cssD) of Escherichia coli.